Consider the following 315-residue polypeptide: Ribose-phosphate pyrophosphokinase (315 aa).

ATP contacts are provided by residues 37 to 39 (DGE) and 96 to 97 (RQ). His131 and Asp170 together coordinate Mg(2+). Lys194 is an active-site residue. Residues Arg196, Asp220, and 224–228 (DTGGT) contribute to the D-ribose 5-phosphate site.

It belongs to the ribose-phosphate pyrophosphokinase family. Class I subfamily. As to quaternary structure, homohexamer. It depends on Mg(2+) as a cofactor.

Its subcellular location is the cytoplasm. The enzyme catalyses D-ribose 5-phosphate + ATP = 5-phospho-alpha-D-ribose 1-diphosphate + AMP + H(+). Its pathway is metabolic intermediate biosynthesis; 5-phospho-alpha-D-ribose 1-diphosphate biosynthesis; 5-phospho-alpha-D-ribose 1-diphosphate from D-ribose 5-phosphate (route I): step 1/1. Involved in the biosynthesis of the central metabolite phospho-alpha-D-ribosyl-1-pyrophosphate (PRPP) via the transfer of pyrophosphoryl group from ATP to 1-hydroxyl of ribose-5-phosphate (Rib-5-P). This Yersinia pestis protein is Ribose-phosphate pyrophosphokinase.